A 143-amino-acid polypeptide reads, in one-letter code: Ribosome maturation factor RimP (143 aa).

The protein belongs to the RimP family.

It localises to the cytoplasm. In terms of biological role, required for maturation of 30S ribosomal subunits. This chain is Ribosome maturation factor RimP, found in Nitrosomonas eutropha (strain DSM 101675 / C91 / Nm57).